We begin with the raw amino-acid sequence, 120 residues long: Seripauperin-13 (120 aa).

A signal peptide spans 1-25; the sequence is MVKLTSIAAGVAAIAATASATTTLA.

Belongs to the SRP1/TIP1 family. Seripauperin subfamily.

This chain is Seripauperin-13 (PAU13), found in Saccharomyces cerevisiae (strain ATCC 204508 / S288c) (Baker's yeast).